Reading from the N-terminus, the 204-residue chain is Octanoyltransferase (204 aa).

In terms of domain architecture, BPL/LPL catalytic spans 30–204; that stretch reads CETPDEIWLL…QSFINQLTDV (175 aa). Substrate is bound by residues 69–76, 136–138, and 149–151; these read RGGQITYH, SLG, and GIA. Catalysis depends on C167, which acts as the Acyl-thioester intermediate.

Belongs to the LipB family.

The protein resides in the cytoplasm. The catalysed reaction is octanoyl-[ACP] + L-lysyl-[protein] = N(6)-octanoyl-L-lysyl-[protein] + holo-[ACP] + H(+). It participates in protein modification; protein lipoylation via endogenous pathway; protein N(6)-(lipoyl)lysine from octanoyl-[acyl-carrier-protein]: step 1/2. Catalyzes the transfer of endogenously produced octanoic acid from octanoyl-acyl-carrier-protein onto the lipoyl domains of lipoate-dependent enzymes. Lipoyl-ACP can also act as a substrate although octanoyl-ACP is likely to be the physiological substrate. The sequence is that of Octanoyltransferase from Nitrosomonas europaea (strain ATCC 19718 / CIP 103999 / KCTC 2705 / NBRC 14298).